The following is a 142-amino-acid chain: Protein KNATM (142 aa).

A coiled-coil region spans residues 4 to 36 (KKDENSILENMKQEINHSLKEEAQEEEEILKKR).

Interacts with KNAT1, KNAT3, KNAT4, BEL1, BLH2, BLH4 and BLH9, but not with BLH8 or the KNATM-A and KNATM-C isoforms. Isoforms KNATM-A and KNATM-C: no interactions with KNATM-B, KNOXX or BELL proteins. As to expression, detected in inflorescences, seedlings, leaves, hydathodes, stems, roots, embryo and siliques. Expressed in a polar pattern in organ primordia and at the boundary of mature organs. Detected in the lateral domains of flower meristems, but not in the inflorescence meristem or the vegetative shoot apical meristem.

The protein localises to the cytoplasm. It is found in the nucleus. Functionally, transcriptional regulator involved in leaf proximal/distal patterning. May act by sequestering BELL transcription factors. In Arabidopsis thaliana (Mouse-ear cress), this protein is Protein KNATM.